The following is a 211-amino-acid chain: Small ribosomal subunit protein uS3 (211 aa).

Positions 16–85 (IDEYFKGKLV…NPQIEVKPLE (70 aa)) constitute a KH type-2 domain.

It belongs to the universal ribosomal protein uS3 family. As to quaternary structure, part of the 30S ribosomal subunit.

Binds the lower part of the 30S subunit head. The polypeptide is Small ribosomal subunit protein uS3 (Methanococcus vannielii (strain ATCC 35089 / DSM 1224 / JCM 13029 / OCM 148 / SB)).